Here is a 147-residue protein sequence, read N- to C-terminus: D-aminoacyl-tRNA deacylase (147 aa).

The Gly-cisPro motif, important for rejection of L-amino acids motif lies at 136-137 (GP).

The protein belongs to the DTD family. In terms of assembly, homodimer.

It is found in the cytoplasm. It catalyses the reaction glycyl-tRNA(Ala) + H2O = tRNA(Ala) + glycine + H(+). The catalysed reaction is a D-aminoacyl-tRNA + H2O = a tRNA + a D-alpha-amino acid + H(+). Its function is as follows. An aminoacyl-tRNA editing enzyme that deacylates mischarged D-aminoacyl-tRNAs. Also deacylates mischarged glycyl-tRNA(Ala), protecting cells against glycine mischarging by AlaRS. Acts via tRNA-based rather than protein-based catalysis; rejects L-amino acids rather than detecting D-amino acids in the active site. By recycling D-aminoacyl-tRNA to D-amino acids and free tRNA molecules, this enzyme counteracts the toxicity associated with the formation of D-aminoacyl-tRNA entities in vivo and helps enforce protein L-homochirality. This is D-aminoacyl-tRNA deacylase from Sulfurihydrogenibium sp. (strain YO3AOP1).